We begin with the raw amino-acid sequence, 376 residues long: MTAATLFESTDGTVVLLDLPRSIEDAQQHPAAVTLPEAPSLVTNSCRDGTSWTRRLISSPPPETPFVTPEPKNGPSPLPAAAQVAQLMIQASVTGALEELRTNYSGPYLLPRQLSPQRMIADGGKAVDDYKSPHACDLESCSTTAEDATKGRYYFPPESHHVLGTIQETKTLLLQSAPNFNVIVLDPPWPNRSAKRKKGGYKVATTTDDIRALLSDVPIPSLLARDGLVAIWVTNKPAFLDMLTSPRDGILSEWGLELVGEWSWLKITTSAEPILPIDSAHRKPWEPLLIAQRKGSKRVFPPFWRRRVIVSVPDTHSRKPNIRDLVNPMLPPRSRGLEIFARNLTAGWWAWGDDVLHFQERSNWVMAESKSPATGC.

The interval 53-78 (TRRLISSPPPETPFVTPEPKNGPSPL) is disordered.

Belongs to the MT-A70-like family.

The enzyme catalyses an adenosine in mRNA + S-adenosyl-L-methionine = an N(6)-methyladenosine in mRNA + S-adenosyl-L-homocysteine + H(+). In terms of biological role, N6-methyladenosine RNA methyltransferase that plays a crucial role in fungal phenotypic traits, virulence, and stress tolerance. Mediates the methylation of mRNAs to produce N6-methyladenosine (m6A)-containing mRNAs. M6A is a modification present at internal sites of mRNAs and some non-coding RNAs and plays a role in mRNA stability and processing. Required for appressorium turgor pressure and regulates autophagosome formation during appressorium formation stage. Specifically, mediates the stability of ATG8 mRNA in a m6A-dependent manner via modification of the m6A site A982 located in 3'UTR region. The chain is N6-methyladenosine RNA methyltransferase MTA1 from Pyricularia oryzae (strain 70-15 / ATCC MYA-4617 / FGSC 8958) (Rice blast fungus).